A 158-amino-acid chain; its full sequence is Transcription elongation factor GreA (158 aa).

The stretch at 49–69 (SEYESAKDEQAFVEGRISQIE) forms a coiled coil. The interval 102-125 (EEPESYTIVGESESDPLSGKISNE) is disordered.

This sequence belongs to the GreA/GreB family.

Necessary for efficient RNA polymerase transcription elongation past template-encoded arresting sites. The arresting sites in DNA have the property of trapping a certain fraction of elongating RNA polymerases that pass through, resulting in locked ternary complexes. Cleavage of the nascent transcript by cleavage factors such as GreA or GreB allows the resumption of elongation from the new 3'terminus. GreA releases sequences of 2 to 3 nucleotides. This Limosilactobacillus fermentum (strain NBRC 3956 / LMG 18251) (Lactobacillus fermentum) protein is Transcription elongation factor GreA.